We begin with the raw amino-acid sequence, 312 residues long: Protoheme IX farnesyltransferase (312 aa).

The next 8 membrane-spanning stretches (helical) occupy residues 34–54, 56–76, 119–139, 152–172, 179–199, 225–245, 248–268, and 283–303; these read LVIF…HPVL, ITSL…NMAL, ILVN…YVVI, IVIG…AATG, LLLF…LALF, ILLY…LGYF, VYGV…IEVF, and LFAF…LEAV.

This sequence belongs to the UbiA prenyltransferase family. Protoheme IX farnesyltransferase subfamily.

Its subcellular location is the cell inner membrane. It carries out the reaction heme b + (2E,6E)-farnesyl diphosphate + H2O = Fe(II)-heme o + diphosphate. It participates in porphyrin-containing compound metabolism; heme O biosynthesis; heme O from protoheme: step 1/1. Converts heme B (protoheme IX) to heme O by substitution of the vinyl group on carbon 2 of heme B porphyrin ring with a hydroxyethyl farnesyl side group. In Bradyrhizobium sp. (strain BTAi1 / ATCC BAA-1182), this protein is Protoheme IX farnesyltransferase.